Consider the following 223-residue polypeptide: Sigma non-opioid intracellular receptor 1 (223 aa).

Topologically, residues 1–9 (MCWAVGRRW) are lumenal. The interval 2-8 (CWAVGRR) is targeting to endoplasmic reticulum-associated lipid droplets. Residues 10 to 30 (AWAALLLAVAAVLAQVVWLWL) form a helical membrane-spanning segment. Residues 31-223 (GTQSFVFQHE…LTTYLFGQDA (193 aa)) are Cytoplasmic-facing. An important for ligand-binding region spans residues 99–106 (SLSEYVLL). The segment at 177 to 223 (VIPSTLGFALADTVFSTQDFLTLFYTLRAYARGLRLELTTYLFGQDA) is C-terminal hydrophobic region.

Belongs to the ERG2 family. In terms of assembly, homotrimer. Forms a ternary complex with ANK2 and ITPR3. The complex is disrupted by agonists. Interacts with KCNA4. Interacts with KCNA2; cocaine consumption leads to increased interaction. Interacts with RNF112 in an oxidative stress-regulated manner.

It is found in the nucleus inner membrane. It localises to the nucleus outer membrane. The protein resides in the nucleus envelope. The protein localises to the cytoplasmic vesicle. Its subcellular location is the endoplasmic reticulum membrane. It is found in the membrane. It localises to the lipid droplet. The protein resides in the cell junction. The protein localises to the cell membrane. Its subcellular location is the cell projection. It is found in the growth cone. It localises to the postsynaptic density membrane. Functionally, functions in lipid transport from the endoplasmic reticulum and is involved in a wide array of cellular functions probably through regulation of the biogenesis of lipid microdomains at the plasma membrane. Involved in the regulation of different receptors it plays a role in BDNF signaling and EGF signaling. Also regulates ion channels like the potassium channel and could modulate neurotransmitter release. Plays a role in calcium signaling through modulation together with ANK2 of the ITP3R-dependent calcium efflux at the endoplasmic reticulum. Plays a role in several other cell functions including proliferation, survival and death. Originally identified for its ability to bind various psychoactive drugs it is involved in learning processes, memory and mood alteration. Necessary for proper mitochondrial axonal transport in motor neurons, in particular the retrograde movement of mitochondria. Plays a role in protecting cells against oxidative stress-induced cell death via its interaction with RNF112. This is Sigma non-opioid intracellular receptor 1 (SIGMAR1) from Bos taurus (Bovine).